Reading from the N-terminus, the 400-residue chain is MNAPLHPLKQPSMLRQLLATEAAGGVLLMFTAALAIIIANSPWASAYQHLLHLPVGPVLTDKLGPMTVHMWINDGLMAIFFLLVGLEIKRELVDGRLASWEQRRLPALPALMGMAVPALIYLAVSRGELGLAGGWAIPAATDIAFAVGALALLGKHAPLSLKVMLVSVAIIDDMGAVAIIAVFYTSSINLLALAGAAGIVAVLLAFNRLRVVALWPYLIGVAALWYVTLLSGVHATIAGVVGALLIPYSAGSGAEREASPLLKLEHGLAPWVGFLIVPAFGFANAGVSFGDLGWSDIFAPLPLAIALGLLLGKQLGVFAGVLLAVKSGLASKPRGASWLQIYGVAMLCGIGFTMSLFIGELAFPGQPEKIDAAKIGILLGSLLSAVIACVILRFAPKQAD.

12 consecutive transmembrane segments (helical) span residues 18-38 (LATE…AIII), 68-88 (VHMW…GLEI), 105-125 (LPAL…LAVS), 133-153 (GGWA…LALL), 163-183 (VMLV…IAVF), 186-206 (SSIN…LLAF), 211-231 (VVAL…TLLS), 232-252 (GVHA…SAGS), 267-287 (GLAP…NAGV), 305-325 (IALG…LLAV), 338-358 (WLQI…SLFI), and 372-392 (AAKI…CVIL).

This sequence belongs to the NhaA Na(+)/H(+) (TC 2.A.33) antiporter family.

The protein localises to the cell inner membrane. It carries out the reaction Na(+)(in) + 2 H(+)(out) = Na(+)(out) + 2 H(+)(in). Its function is as follows. Na(+)/H(+) antiporter that extrudes sodium in exchange for external protons. This is Na(+)/H(+) antiporter NhaA from Pseudomonas entomophila (strain L48).